The sequence spans 349 residues: Flagellar P-ring protein (349 aa).

A signal peptide spans 1-20; the sequence is MSKAIKILLPLLLFSLSLQA.

The protein belongs to the FlgI family. As to quaternary structure, the basal body constitutes a major portion of the flagellar organelle and consists of four rings (L,P,S, and M) mounted on a central rod.

The protein resides in the periplasm. It localises to the bacterial flagellum basal body. Functionally, assembles around the rod to form the L-ring and probably protects the motor/basal body from shearing forces during rotation. This chain is Flagellar P-ring protein, found in Wolinella succinogenes (strain ATCC 29543 / DSM 1740 / CCUG 13145 / JCM 31913 / LMG 7466 / NCTC 11488 / FDC 602W) (Vibrio succinogenes).